The sequence spans 448 residues: Adenylosuccinate synthetase (448 aa).

Residues 36-42 (GDEGKGK) and 64-66 (GHT) each bind GTP. Aspartate 37 serves as the catalytic Proton acceptor. The Mg(2+) site is built by aspartate 37 and glycine 64. IMP-binding positions include 37–40 (DEGK), 62–65 (NAGH), threonine 154, arginine 168, asparagine 246, threonine 261, and arginine 325. The active-site Proton donor is histidine 65. Position 321 to 327 (321 to 327 (VTTKRKR)) interacts with substrate. GTP-binding positions include arginine 327, 353 to 355 (KLD), and 436 to 438 (GVG).

This sequence belongs to the adenylosuccinate synthetase family. In terms of assembly, homodimer. Requires Mg(2+) as cofactor.

The protein resides in the cytoplasm. It carries out the reaction IMP + L-aspartate + GTP = N(6)-(1,2-dicarboxyethyl)-AMP + GDP + phosphate + 2 H(+). It participates in purine metabolism; AMP biosynthesis via de novo pathway; AMP from IMP: step 1/2. In terms of biological role, plays an important role in the de novo pathway and in the salvage pathway of purine nucleotide biosynthesis. Catalyzes the first committed step in the biosynthesis of AMP from IMP. The protein is Adenylosuccinate synthetase of Drosophila persimilis (Fruit fly).